The sequence spans 147 residues: MKIIIQRVKKAQVSIEGQIQGKINQGLLLLVGVGPEDQEEDLDYAVRKLVNMRIFSDVEGKMNLSVKDIEGEILSISQFTLFADTKKGNRPAFTGAAKPDMASDFYDAFNQKLAQEVPVQTGIFGADMQVELVNNGPVTIILDTKKR.

A Gly-cisPro motif, important for rejection of L-amino acids motif is present at residues 136–137 (GP).

Belongs to the DTD family. In terms of assembly, homodimer.

The protein localises to the cytoplasm. The catalysed reaction is glycyl-tRNA(Ala) + H2O = tRNA(Ala) + glycine + H(+). It carries out the reaction a D-aminoacyl-tRNA + H2O = a tRNA + a D-alpha-amino acid + H(+). Its function is as follows. An aminoacyl-tRNA editing enzyme that deacylates mischarged D-aminoacyl-tRNAs. Also deacylates mischarged glycyl-tRNA(Ala), protecting cells against glycine mischarging by AlaRS. Acts via tRNA-based rather than protein-based catalysis; rejects L-amino acids rather than detecting D-amino acids in the active site. By recycling D-aminoacyl-tRNA to D-amino acids and free tRNA molecules, this enzyme counteracts the toxicity associated with the formation of D-aminoacyl-tRNA entities in vivo and helps enforce protein L-homochirality. The sequence is that of D-aminoacyl-tRNA deacylase from Streptococcus pneumoniae (strain Taiwan19F-14).